The sequence spans 420 residues: Protein disulfide isomerase Creld1 (420 aa).

The N-terminal stretch at 1–29 is a signal peptide; that stretch reads MAPLPPRGLVPSLLWCLSLFLSLPGPVWL. The Extracellular portion of the chain corresponds to 30-362; the sequence is QPSPPPHPSP…GFFAEMTEDE (333 aa). The CXXC motif lies at 46-49; it reads CHTC. 4 cysteine pairs are disulfide-bonded: cysteine 46/cysteine 49, cysteine 155/cysteine 169, cysteine 163/cysteine 181, and cysteine 183/cysteine 192. An EGF-like 1 domain is found at 153–193; that stretch reads LPCPGGTERPCGGYGQCEGEGTRGGSGHCDCQAGYGGEACG. Residue asparagine 205 is glycosylated (N-linked (GlcNAc...) asparagine). FU repeat units lie at residues 208-255 and 268-315; these read HLVC…EQAT and SYEC…VVCP. The CXXC signature appears at 278 to 281; the sequence is CLGC. Intrachain disulfides connect cysteine 278–cysteine 281, cysteine 309–cysteine 321, cysteine 314–cysteine 330, and cysteine 332–cysteine 343. In terms of domain architecture, EGF-like 2; calcium-binding spans 305-342; sequence DVDECETVVCPGENEKCENTEGGYRCVCAEGYRQEDGI. The helical transmembrane segment at 363-383 threads the bilayer; the sequence is MVVLQQMFFGVIICALATLAA. A topological domain (cytoplasmic) is located at residue lysine 384. The helical transmembrane segment at 385–405 threads the bilayer; it reads GDLVFTAIFIGAVAAMTGYWL. Over 406-420 the chain is Extracellular; the sequence is SERSDRVLEGFIKGR.

It belongs to the CRELD family. In terms of tissue distribution, expressed in myoblast C2C12 cells (at protein level).

It localises to the membrane. It carries out the reaction Catalyzes the rearrangement of -S-S- bonds in proteins.. In terms of biological role, protein disulfide isomerase. Promotes the localization of acetylcholine receptors (AChRs) to the plasma membrane. The protein is Protein disulfide isomerase Creld1 (Creld1) of Mus musculus (Mouse).